The sequence spans 706 residues: uncharacterized protein (706 aa).

Coiled coils occupy residues 86–162 (TKNV…AKKI), 269–299 (DYLK…VNEL), and 337–427 (DDYI…QSDY).

This is an uncharacterized protein from Staphylococcus aureus (strain MRSA252).